We begin with the raw amino-acid sequence, 73 residues long: MTKTISISDDVYEMLVKIKGKRSFSEVIRELVKKEGNFDLLMVAFGTRSEEEVEKLKREMKEVEEWMQSLCNH.

This sequence belongs to the UPF0330 family.

Possibly the antitoxin component of a type II toxin-antitoxin (TA) system. Its cognate toxin is VapC18 (Potential). The protein is Putative antitoxin VapB18 (vapB18) of Archaeoglobus fulgidus (strain ATCC 49558 / DSM 4304 / JCM 9628 / NBRC 100126 / VC-16).